The chain runs to 806 residues: Leucine--tRNA ligase (806 aa).

Residues 40-51 (PYPSGQGLHVGH) carry the 'HIGH' region motif. The 'KMSKS' region signature appears at 578–582 (KMSKS). Lys-581 is an ATP binding site.

It belongs to the class-I aminoacyl-tRNA synthetase family.

The protein resides in the cytoplasm. It carries out the reaction tRNA(Leu) + L-leucine + ATP = L-leucyl-tRNA(Leu) + AMP + diphosphate. The chain is Leucine--tRNA ligase from Limosilactobacillus reuteri (strain DSM 20016) (Lactobacillus reuteri).